The sequence spans 346 residues: MKQIINPLKGNNNKVPIWFMRQAGRYLPEYKKVRETTKNFLDFCYDVSKATEVTLQPIKRYGFDAAIIFSDILVLPHALGWEVDFKENIGPILKQFKSQEDFKYLQINPNYKLEKVYEIIKKVKKELPSPISLIGFAGSPWTVMSYMLEGKGKQDFKTSKKFIYENRILAEELLNFITEKTADHLINQAKSGADILKLFDSWSGVLAEEEFTEFVIEPTKKIILKVKEVFPKTPIIAFPKGAGLLYEKFIKEVPIDVLAVDQMVPLKKMKEWSDKVIVQGNLDPVVLLTNKEIIKEKTYKILQVMKGKNFIFNLGHGILPETPTENVEFLIEYVRLYEEKNSNSTF.

Substrate contacts are provided by residues 21-25 (RQAGR), Asp-71, Tyr-146, Ser-201, and His-316.

Belongs to the uroporphyrinogen decarboxylase family. Homodimer.

The protein localises to the cytoplasm. It catalyses the reaction uroporphyrinogen III + 4 H(+) = coproporphyrinogen III + 4 CO2. It functions in the pathway porphyrin-containing compound metabolism; protoporphyrin-IX biosynthesis; coproporphyrinogen-III from 5-aminolevulinate: step 4/4. Its function is as follows. Catalyzes the decarboxylation of four acetate groups of uroporphyrinogen-III to yield coproporphyrinogen-III. The polypeptide is Uroporphyrinogen decarboxylase (Rickettsia africae (strain ESF-5)).